Reading from the N-terminus, the 391-residue chain is MGCRACLRPEASGAVQGRWLGAALSGLCLLSALALLEWLGAPTETAWRAAQGNVDAPNVGSSTAQVPRLLTMSVTRRRRYTLTPARLRWDHFNLTYRVLSFPRNLLSPEETRRGLAAAFRMWSDVSPFSFREVAPERPSDLKIGFYPVNHTDCLVSAVHHCFDGPTGELAHAFFPPHGGIHFDDSEYWVLGPTRYSWKKGVWLTNLVHVAAHEIGHALGLMHSQQDQALMHLNATLRGWKALSQDELWGLHRLYGCLDRIFVCASWARKGFCDVRQRLMKRLCPRSCDFCYEFPFPTVATTTSPTRTKTRLVREGRNMTFHCGQKILHKKGKVYWYKDQEPLEFSYPGYLALGEAQLSIIANAVNEGTYTCVVRRHQRVLSTYSWRVRVRN.

At 1-18 (MGCRACLRPEASGAVQGR) the chain is on the cytoplasmic side. The propeptide occupies 1–79 (MGCRACLRPE…LTMSVTRRRR (79 aa)). Residues 19-39 (WLGAALSGLCLLSALALLEWL) traverse the membrane as a helical segment. The Lumenal portion of the chain corresponds to 40–391 (GAPTETAWRA…TYSWRVRVRN (352 aa)). Residues Asn93 and Asn149 are each glycosylated (N-linked (GlcNAc...) asparagine). His212 contributes to the Zn(2+) binding site. Residue Glu213 is part of the active site. Residues His216 and His222 each contribute to the Zn(2+) site. Residue Asn233 is glycosylated (N-linked (GlcNAc...) asparagine). The region spanning 256–290 (CLDRIFVCASWARKGFCDVRQRLMKRLCPRSCDFC) is the ShKT domain. Intrachain disulfides connect Cys256/Cys290, Cys263/Cys283, and Cys272/Cys287. One can recognise an Ig-like C2-type domain in the interval 298–383 (VATTTSPTRT…RRHQRVLSTY (86 aa)). N-linked (GlcNAc...) asparagine glycosylation occurs at Asn317. Residues Cys322 and Cys371 are joined by a disulfide bond.

It belongs to the peptidase M10A family. The cofactor is Zn(2+). N-glycosylated. In terms of processing, proteolytic cleavage might yield an active form. In terms of tissue distribution, expressed at relatively high level in heart, lung and spleen. Not detected in brain, liver, skeletal muscle, kidney and testis.

The protein localises to the endoplasmic reticulum membrane. The protein resides in the membrane. With respect to regulation, inhibited by TIMP2. In terms of biological role, protease. May regulate the surface expression of some potassium channels by retaining them in the endoplasmic reticulum. This Mus musculus (Mouse) protein is Matrix metalloproteinase-23 (Mmp23).